The chain runs to 311 residues: 5'-adenylylsulfate reductase-like 3 (311 aa).

The signal sequence occupies residues M1 to A22. Residues S23–G164 enclose the Thioredoxin domain. N-linked (GlcNAc...) asparagine glycosylation is present at N139. The chain crosses the membrane as a helical span at residues L210–G230. Residues N281 and N305 are each glycosylated (N-linked (GlcNAc...) asparagine).

The protein localises to the membrane. This chain is 5'-adenylylsulfate reductase-like 3 (APRL3), found in Oryza sativa subsp. japonica (Rice).